We begin with the raw amino-acid sequence, 276 residues long: MDFSDLKKPGKVFFTITDEPEIKNGFQLKDGLNIIDSDKEVPQEFDCDYKPIVPNXLYFSEPKYICEYMAYGIYLREVYLPDDPKLKITRMKNFPCGKSMMYGANMIILGKKHKLSDPETYEYIEKCGGKLRYDGDNALLMAAENGYYEVVTYLINKGCDPRSDYDYALRSAAEKGHIDVVKLLLEKGADISSHNHWPLSYAALEGKFEMVKFLISRGADVRAKNYNPIKYALDGGHREIADYMLDLCPEIGSVSDDDTYDSDSSDYSEDDSESIN.

ANK repeat units lie at residues 134 to 163 (DGDN…DPRS), 164 to 193 (DYDY…DISS), 195 to 223 (NHWP…DVRA), and 225 to 253 (NYNP…EIGS). Residues 254–276 (VSDDDTYDSDSSDYSEDDSESIN) are disordered. Residues 255-276 (SDDDTYDSDSSDYSEDDSESIN) are compositionally biased toward acidic residues.

The protein is Putative ankyrin repeat protein R838 of Acanthamoeba polyphaga (Amoeba).